A 154-amino-acid polypeptide reads, in one-letter code: Insulin-like growth factor 1 (154 aa).

The b stretch occupies residues 50-78; it reads GPETLCGAELVDALQFVCGDRGFYFNKPT. Disulfide bonds link Cys-55/Cys-97, Cys-67/Cys-110, and Cys-96/Cys-101. The interval 79–90 is c; the sequence is GYGSSSRRAPQT. Residues 91-111 are a; the sequence is GIVDECCFRSCDLRRLEMYCA. The tract at residues 112–119 is d; sequence PLKAAKSA. Positions 120–154 are cleaved as a propeptide — e peptide; sequence RSVRAQRHTDMPKAQKEVHLKNTSRGSAGNKNYRM. The disordered stretch occupies residues 121–154; it reads SVRAQRHTDMPKAQKEVHLKNTSRGSAGNKNYRM. Over residues 126–139 the composition is skewed to basic and acidic residues; sequence RHTDMPKAQKEVHL. The span at 140–154 shows a compositional bias: polar residues; that stretch reads KNTSRGSAGNKNYRM.

The protein belongs to the insulin family. As to quaternary structure, forms a ternary complex with IGFR1 and ITGAV:ITGB3. Forms a ternary complex with IGFR1 and ITGA6:ITGB4. Forms a ternary complex with IGFBP3 and ALS.

Its subcellular location is the secreted. Functionally, the insulin-like growth factors, isolated from plasma, are structurally and functionally related to insulin but have a much higher growth-promoting activity. May be a physiological regulator of [1-14C]-2-deoxy-D-glucose (2DG) transport and glycogen synthesis in osteoblasts. Stimulates glucose transport in bone-derived osteoblastic (PyMS) cells and is effective at much lower concentrations than insulin, not only regarding glycogen and DNA synthesis but also with regard to enhancing glucose uptake. May play a role in synapse maturation. Ca(2+)-dependent exocytosis of IGF1 is required for sensory perception of smell in the olfactory bulb. Acts as a ligand for IGF1R. Binds to the alpha subunit of IGF1R, leading to the activation of the intrinsic tyrosine kinase activity which autophosphorylates tyrosine residues in the beta subunit thus initiating a cascade of down-stream signaling events leading to activation of the PI3K-AKT/PKB and the Ras-MAPK pathways. Binds to integrins ITGAV:ITGB3 and ITGA6:ITGB4. Its binding to integrins and subsequent ternary complex formation with integrins and IGFR1 are essential for IGF1 signaling. Induces the phosphorylation and activation of IGFR1, MAPK3/ERK1, MAPK1/ERK2 and AKT1. As part of the MAPK/ERK signaling pathway, acts as a negative regulator of apoptosis in cardiomyocytes via promotion of STUB1/CHIP-mediated ubiquitination and degradation of ICER-type isoforms of CREM. This chain is Insulin-like growth factor 1, found in Ovis aries (Sheep).